We begin with the raw amino-acid sequence, 72 residues long: Translation initiation factor IF-1 (72 aa).

The region spanning 1-72 (MSKQDVIELE…SRGRITWRKK (72 aa)) is the S1-like domain.

This sequence belongs to the IF-1 family. As to quaternary structure, component of the 30S ribosomal translation pre-initiation complex which assembles on the 30S ribosome in the order IF-2 and IF-3, IF-1 and N-formylmethionyl-tRNA(fMet); mRNA recruitment can occur at any time during PIC assembly.

It is found in the cytoplasm. Its function is as follows. One of the essential components for the initiation of protein synthesis. Stabilizes the binding of IF-2 and IF-3 on the 30S subunit to which N-formylmethionyl-tRNA(fMet) subsequently binds. Helps modulate mRNA selection, yielding the 30S pre-initiation complex (PIC). Upon addition of the 50S ribosomal subunit IF-1, IF-2 and IF-3 are released leaving the mature 70S translation initiation complex. This Alkaliphilus oremlandii (strain OhILAs) (Clostridium oremlandii (strain OhILAs)) protein is Translation initiation factor IF-1.